We begin with the raw amino-acid sequence, 140 residues long: Profilin-1 (140 aa).

Position 2 is an N-acetylalanine (A2). S28 carries the post-translational modification Phosphoserine. A Glycyl lysine isopeptide (Lys-Gly) (interchain with G-Cter in SUMO2); alternate cross-link involves residue K54. A Glycyl lysine isopeptide (Lys-Gly) (interchain with G-Cter in ubiquitin); alternate cross-link involves residue K54. Residues S57 and S85 each carry the phosphoserine modification. Residues K105 and K108 each carry the N6-acetyllysine modification. Y129 carries the post-translational modification Phosphotyrosine. S138 carries the phosphoserine; by ROCK1 modification.

It belongs to the profilin family. In terms of assembly, found in a complex with XPO6, Ran, ACTB and PFN1. Interacts with ACTB. Interacts with VASP. Interacts with HTT. Interacts with SH3BGRL. Occurs in many kinds of cells as a complex with monomeric actin in a 1:1 ratio. Interacts with ACTMAP. Phosphorylation at Ser-138 reduces its affinity for G-actin and blocks its interaction with HTT, reducing its ability to inhibit androgen receptor (AR) and HTT aggregation. Expressed in epididymis (at protein level).

Its subcellular location is the cytoplasm. The protein resides in the cytoskeleton. Functionally, binds to actin and affects the structure of the cytoskeleton. At high concentrations, profilin prevents the polymerization of actin, whereas it enhances it at low concentrations. By binding to PIP2, it inhibits the formation of IP3 and DG. Inhibits androgen receptor (AR) and HTT aggregation and binding of G-actin is essential for its inhibition of AR. This Homo sapiens (Human) protein is Profilin-1 (PFN1).